Consider the following 130-residue polypeptide: Sigma-w pathway protein YsdB (130 aa).

Residues 2–22 (FVMVLRIILLALFAYCIYAVV) traverse the membrane as a helical segment.

It is found in the membrane. May mediate a negative feedback loop that down-regulates the expression of the sigma-W regulon following the activation of sigma-W in response to conditions of cell envelope stress. Might interact with and inhibit the activity of the protease PrsW, or could bind to the anti-sigma-W factor RsiW and thereby protect it from PrsW-mediated cleavage. The protein is Sigma-w pathway protein YsdB (ysdB) of Bacillus subtilis (strain 168).